The primary structure comprises 338 residues: uncharacterized protein (338 aa).

The region spanning 144-321 is the TNase-like domain; it reads HTLPVDVKAV…RAARVGLWAS (178 aa). Active-site residues include Arg228, Glu236, and Arg270.

This is an uncharacterized protein from Capnoides sempervirens (Rock-harlequin).